A 69-amino-acid polypeptide reads, in one-letter code: DNA-directed RNA polymerase subunit epsilon (69 aa).

The protein belongs to the RNA polymerase subunit epsilon family. Monomer. RNAP is composed of a core of 2 alpha, a beta and a beta' subunit. The core is associated with a delta subunit, and at least one of epsilon or omega. When a sigma factor is associated with the core the holoenzyme is formed, which can initiate transcription.

Its subcellular location is the cytoplasm. It localises to the nucleoid. It catalyses the reaction RNA(n) + a ribonucleoside 5'-triphosphate = RNA(n+1) + diphosphate. Its function is as follows. A non-essential component of RNA polymerase (RNAP). Has a similar structure to bacteriophage T7 protein Gp2 (AC P03704), which is known to bind to RNAP in the DNA binding-cleft. Unlike Gp2 however, this protein does not inhibit transcription initiation. In vitro reconstitution experiments show this subunit is dispensible. This is DNA-directed RNA polymerase subunit epsilon from Bacillus subtilis (strain 168).